We begin with the raw amino-acid sequence, 225 residues long: MEQEICVIGFSGGQDSTTLAVWAKKRFKKVCLVGFDYAQKHSVELECAQKIASLLQLPYEIIPLDFLENITHSALFKNSNDLMGHSHAQNKDLPNSFVPNRNAIFITLLHSYAQKLGASNIALGVSQADFSGYPDCKEDFIKSIEHALNLGSNTAIKIVTPLMFLSKAQEFQMAKDLGVLDLIIKETHTCYQGERKILHAYGYGCDKCPACQLRKKGFEEFQAML.

Position 10–20 (10–20) interacts with ATP; that stretch reads FSGGQDSTTLA. 4 residues coordinate Zn(2+): Cys-190, Cys-205, Cys-208, and Cys-211.

Belongs to the QueC family. Zn(2+) is required as a cofactor.

The enzyme catalyses 7-carboxy-7-deazaguanine + NH4(+) + ATP = 7-cyano-7-deazaguanine + ADP + phosphate + H2O + H(+). It functions in the pathway purine metabolism; 7-cyano-7-deazaguanine biosynthesis. Functionally, catalyzes the ATP-dependent conversion of 7-carboxy-7-deazaguanine (CDG) to 7-cyano-7-deazaguanine (preQ(0)). The polypeptide is 7-cyano-7-deazaguanine synthase (Helicobacter pylori (strain J99 / ATCC 700824) (Campylobacter pylori J99)).